The primary structure comprises 453 residues: Bifunctional protein GlmU (453 aa).

Positions 1–225 (MNIVILAAGT…EWETLGVNSK (225 aa)) are pyrophosphorylase. UDP-N-acetyl-alpha-D-glucosamine is bound by residues 6–9 (LAAG), Lys-20, Gln-71, 76–77 (GT), 98–100 (YGD), Gly-135, Glu-150, Asn-165, and Asn-223. Asp-100 is a binding site for Mg(2+). Residue Asn-223 coordinates Mg(2+). The linker stretch occupies residues 226–246 (AQLAELERIHQRNVADALLAD). The tract at residues 247 to 453 (GVTLADPARI…GYVRPVKKKS (207 aa)) is N-acetyltransferase. Positions 329 and 347 each coordinate UDP-N-acetyl-alpha-D-glucosamine. The Proton acceptor role is filled by His-359. UDP-N-acetyl-alpha-D-glucosamine contacts are provided by Tyr-362 and Asn-373. Acetyl-CoA-binding positions include Ala-376, 382 to 383 (NY), Ser-401, and Ala-419.

The protein in the N-terminal section; belongs to the N-acetylglucosamine-1-phosphate uridyltransferase family. In the C-terminal section; belongs to the transferase hexapeptide repeat family. Homotrimer. The cofactor is Mg(2+).

Its subcellular location is the cytoplasm. The enzyme catalyses alpha-D-glucosamine 1-phosphate + acetyl-CoA = N-acetyl-alpha-D-glucosamine 1-phosphate + CoA + H(+). It catalyses the reaction N-acetyl-alpha-D-glucosamine 1-phosphate + UTP + H(+) = UDP-N-acetyl-alpha-D-glucosamine + diphosphate. Its pathway is nucleotide-sugar biosynthesis; UDP-N-acetyl-alpha-D-glucosamine biosynthesis; N-acetyl-alpha-D-glucosamine 1-phosphate from alpha-D-glucosamine 6-phosphate (route II): step 2/2. The protein operates within nucleotide-sugar biosynthesis; UDP-N-acetyl-alpha-D-glucosamine biosynthesis; UDP-N-acetyl-alpha-D-glucosamine from N-acetyl-alpha-D-glucosamine 1-phosphate: step 1/1. It participates in bacterial outer membrane biogenesis; LPS lipid A biosynthesis. Catalyzes the last two sequential reactions in the de novo biosynthetic pathway for UDP-N-acetylglucosamine (UDP-GlcNAc). The C-terminal domain catalyzes the transfer of acetyl group from acetyl coenzyme A to glucosamine-1-phosphate (GlcN-1-P) to produce N-acetylglucosamine-1-phosphate (GlcNAc-1-P), which is converted into UDP-GlcNAc by the transfer of uridine 5-monophosphate (from uridine 5-triphosphate), a reaction catalyzed by the N-terminal domain. The chain is Bifunctional protein GlmU from Burkholderia multivorans (strain ATCC 17616 / 249).